Consider the following 989-residue polypeptide: Protease PrtH (989 aa).

2 consecutive repeats follow at residues 270 to 323 (TPTD…KCVN) and 528 to 581 (SPAS…VCVD). The interval 969–989 (PRDTPWRYGKRELPPSASGMR) is disordered.

The protein belongs to the peptidase C25 family.

The protein resides in the cytoplasmic vesicle. In terms of biological role, cleaves human complement component C3. May enable P.gingivalis to evade complement-mediated killing during the immune response. Plays an important role in soft tissue infections and is a virulence factor. The polypeptide is Protease PrtH (prtH) (Porphyromonas gingivalis (strain ATCC BAA-308 / W83)).